The primary structure comprises 333 residues: MVSKPLFSLLLLTVALVVFQTGTLVNAEDSEPSSSTRKPLVKIVKGKKLCDKGWECKGWSEYCCNHTISDFFETYQFENLFSKRNSPVAHAVGFWDYRSFITAAAEYQPLGFGTAGEKLQGMKEVAAFLGHVGSKTSCGYGVATGGPLAWGLCYNKEMSPDQLYCDDYYKLTYPCTPGVSYHGRGALPVYWNYNYGQTGEALKVDLLSHPEYLENNATLAFQAAIWRWMTPPKKHLPSAHDVFVGKWKPTKNDTAAKRTPGFGATINVLYGDQICNSGFDNDEMNNIVSHYLYYLDLIGVGREEAGPHEKLSCADQEPFSSSSSAPPSSGSSS.

A signal peptide spans 1–27 (MVSKPLFSLLLLTVALVVFQTGTLVNA). A disulfide bond links Cys50 and Cys56. Asn65 carries N-linked (GlcNAc...) asparagine glycosylation. Cysteines 165 and 175 form a disulfide. 2 N-linked (GlcNAc...) asparagine glycosylation sites follow: Asn216 and Asn252. An intrachain disulfide couples Cys275 to Cys313. The tract at residues 307-333 (PHEKLSCADQEPFSSSSSAPPSSGSSS) is disordered. Over residues 320–333 (SSSSSAPPSSGSSS) the composition is skewed to low complexity.

The protein belongs to the glycosyl hydrolase 19 family. As to expression, mostly expressed in stems, especially in xylem and interfascicular fibers.

It is found in the secreted. No chitinase activity. Required for proper cell wall biosynthesis in etiolated seedlings. Prevents lignin accumulation in hypocotyls. The polypeptide is Chitinase-like protein 2 (CTL2) (Arabidopsis thaliana (Mouse-ear cress)).